A 677-amino-acid chain; its full sequence is Methionine--tRNA ligase (677 aa).

The 'HIGH' region signature appears at 14–24; that stretch reads PYANGSIHLGH. Residues C145, C148, C158, and C161 each coordinate Zn(2+). Positions 331-335 match the 'KMSKS' region motif; that stretch reads KMSKS. Residue K334 coordinates ATP. A tRNA-binding domain is found at 575-677; the sequence is AFAAVDLRIA…SGAKPGQRVK (103 aa).

The protein belongs to the class-I aminoacyl-tRNA synthetase family. MetG type 1 subfamily. In terms of assembly, homodimer. Zn(2+) serves as cofactor.

The protein localises to the cytoplasm. The catalysed reaction is tRNA(Met) + L-methionine + ATP = L-methionyl-tRNA(Met) + AMP + diphosphate. Its function is as follows. Is required not only for elongation of protein synthesis but also for the initiation of all mRNA translation through initiator tRNA(fMet) aminoacylation. The chain is Methionine--tRNA ligase from Pseudomonas aeruginosa (strain LESB58).